The chain runs to 328 residues: uncharacterized protein (328 aa).

This sequence to the C-terminal of para-aminobenzoate synthase component I.

This is an uncharacterized protein from Haemophilus influenzae (strain ATCC 51907 / DSM 11121 / KW20 / Rd).